A 244-amino-acid polypeptide reads, in one-letter code: uncharacterized protein (244 aa).

Residues glutamine 5–asparagine 244 form the GP-PDE domain.

The protein to glycerophosphoryl diester phosphodiesterases (EC 3.1.4.46). To M.genitalium MG385.

This is an uncharacterized protein from Mycoplasma genitalium (strain ATCC 33530 / DSM 19775 / NCTC 10195 / G37) (Mycoplasmoides genitalium).